We begin with the raw amino-acid sequence, 344 residues long: NADH-ubiquinone oxidoreductase chain 2 (344 aa).

11 helical membrane passes run 1-21, 24-44, 59-79, 94-114, 121-141, 150-170, 177-197, 201-221, 245-265, 273-293, and 324-344; these read MNPLALTIFLLSLAIGTTITL, FHWLLAWIGLEINTLAIIPLM, YFLTQAAASALVLFSSLISAW, MNILSIALMMKLGLAPLHFWI, ISLPTGLILSTWQKIAPMALL, LNLTIALGLTSIMVGGWGGIG, IMAFSSIGHLGWIIVILKFDP, LLNFVLYIIMTAAMFMSLTTI, LILLSLAGLPPLTGFTPKLLI, NATLLAVMVMFISLLALFFYI, and TAIMNTMALILLPITPTLLLL.

Belongs to the complex I subunit 2 family.

It is found in the mitochondrion inner membrane. It carries out the reaction a ubiquinone + NADH + 5 H(+)(in) = a ubiquinol + NAD(+) + 4 H(+)(out). Its function is as follows. Core subunit of the mitochondrial membrane respiratory chain NADH dehydrogenase (Complex I) that is believed to belong to the minimal assembly required for catalysis. Complex I functions in the transfer of electrons from NADH to the respiratory chain. The immediate electron acceptor for the enzyme is believed to be ubiquinone. The sequence is that of NADH-ubiquinone oxidoreductase chain 2 (MT-ND2) from Aquarana catesbeiana (American bullfrog).